A 399-amino-acid polypeptide reads, in one-letter code: Succinate--CoA ligase [ADP-forming] subunit beta (399 aa).

The 246-residue stretch at 9–254 (KAVLQPFGVS…ETEEDAKEIE (246 aa)) folds into the ATP-grasp domain. Residues Lys46, 53 to 55 (GRG), Glu109, Ser112, and Glu117 each bind ATP. Mg(2+) is bound by residues Asn209 and Asp223. Substrate-binding positions include Asn274 and 331-333 (GIM).

The protein belongs to the succinate/malate CoA ligase beta subunit family. As to quaternary structure, heterotetramer of two alpha and two beta subunits. The cofactor is Mg(2+).

It carries out the reaction succinate + ATP + CoA = succinyl-CoA + ADP + phosphate. The enzyme catalyses GTP + succinate + CoA = succinyl-CoA + GDP + phosphate. The protein operates within carbohydrate metabolism; tricarboxylic acid cycle; succinate from succinyl-CoA (ligase route): step 1/1. In terms of biological role, succinyl-CoA synthetase functions in the citric acid cycle (TCA), coupling the hydrolysis of succinyl-CoA to the synthesis of either ATP or GTP and thus represents the only step of substrate-level phosphorylation in the TCA. The beta subunit provides nucleotide specificity of the enzyme and binds the substrate succinate, while the binding sites for coenzyme A and phosphate are found in the alpha subunit. The chain is Succinate--CoA ligase [ADP-forming] subunit beta from Rhodopseudomonas palustris (strain BisB18).